A 210-amino-acid chain; its full sequence is Protein GET1 (210 aa).

Residues 1–4 (MPSL) lie on the Lumenal side of the membrane. Residues 5–24 (LIIVLIIHVVTYLINTIGAN) form a helical membrane-spanning segment. The Cytoplasmic segment spans residues 25-110 (TIDSLLWLLY…SFDLAVKSIR (86 aa)). The stretch at 39 to 95 (NQTSQTANEQRRLKREVMQLKREMNATSSQDEFAKWAKLRRRHDKTMEEYEAKNKAL) forms a coiled coil. The helical transmembrane segment at 111-131 (FFSTTGLKLFLQFWCSKTPIF) threads the bilayer. Residues 132–155 (ELPRGWIPWQVEWVLSFPRAPLGT) lie on the Lumenal side of the membrane. The chain crosses the membrane as a helical span at residues 156-172 (VSIQIWGGVCATVVSLA). Residues 173–210 (GDAIGVVNVYLTSKAPKQKEPATSGENSARPMAIKKEL) lie on the Cytoplasmic side of the membrane. A disordered region spans residues 189–210 (KQKEPATSGENSARPMAIKKEL).

This sequence belongs to the WRB/GET1 family. As to quaternary structure, interacts with GET3.

The protein localises to the endoplasmic reticulum membrane. Required for the post-translational delivery of tail-anchored (TA) proteins to the endoplasmic reticulum. Acts as a membrane receptor for soluble GET3, which recognizes and selectively binds the transmembrane domain of TA proteins in the cytosol. The protein is Protein GET1 of Coccidioides immitis (strain RS) (Valley fever fungus).